The chain runs to 253 residues: HTH-type transcriptional regulator AdiY (253 aa).

Residues 149-246 form the HTH araC/xylS-type domain; the sequence is DSVYQIIESD…GMTPLHYVSQ (98 aa). 2 DNA-binding regions (H-T-H motif) span residues 166–187 and 213–236; these read SMVA…KSEN and ISQV…KDFY.

This is HTH-type transcriptional regulator AdiY (adiY) from Escherichia coli (strain K12).